Reading from the N-terminus, the 460-residue chain is MQKTYIWALVSLLASSLVDARSAVFDQTPLDIGGSDDSFDSIARIDPNNNDLLKSEMDKVIASSELLSLHRALVEIKSISDNEQAVGGFLMDYLYSKNFTVEKQYVDYDDPTGKPIRSNRRFNIYAYPGNSASPGIILTSHIDTVPPFIPYSLSHPESASFKRDDILISGRGTVDDKASVACQVIAAMDHLEKHPDIPIGLLFVVSEEVGGRGMSTFSNSRLNSGTYHTIIFGEPTERALVAGHKGMVSFTIRVHGKPAHSGYPWLGRSAVSEMLPILTEVDRLGDIPVSQGGLPSSEKYGRTTLNIGFMSGGVAANVVAEEAVANVAVRLAAGNPEDAKDIIFRAIRNAATKHRKDATVVISNGLERPKGDIEVIFGLEAYGVVDIDADVDGFNVTTVNYGTDVPHWKIYGDNVKRYLYGPGTIFVAHGKNEALTVGELEAGLEGYKTLVAKAAERERS.

An N-terminal signal peptide occupies residues 1 to 22 (MQKTYIWALVSLLASSLVDARS). N98 carries an N-linked (GlcNAc...) asparagine glycan. Residue D175 coordinates Zn(2+). The Proton acceptor role is filled by E207. E208 provides a ligand contact to Zn(2+). N395 is a glycosylation site (N-linked (GlcNAc...) asparagine).

The protein belongs to the peptidase M20A family. Zn(2+) is required as a cofactor.

The protein resides in the secreted. The protein is Probable carboxypeptidase ARB_01041 of Arthroderma benhamiae (strain ATCC MYA-4681 / CBS 112371) (Trichophyton mentagrophytes).